We begin with the raw amino-acid sequence, 42 residues long: ESIPFSETRGYVKNVLAYDAYYRHFMGEKDALMSDAEWQRRY.

This sequence belongs to the transglycosylase Slt family.

Its subcellular location is the periplasm. The enzyme catalyses Exolytic cleavage of the (1-&gt;4)-beta-glycosidic linkage between N-acetylmuramic acid (MurNAc) and N-acetylglucosamine (GlcNAc) residues in peptidoglycan, from either the reducing or the non-reducing ends of the peptidoglycan chains, with concomitant formation of a 1,6-anhydrobond in the MurNAc residue.. Its function is as follows. Murein-degrading enzyme. Catalyzes the cleavage of the glycosidic bonds between N-acetylmuramic acid and N-acetylglucosamine residues in peptidoglycan. May play a role in recycling of muropeptides during cell elongation and/or cell division. The protein is Soluble lytic murein transglycosylase (slt) of Enterobacter cloacae.